The following is a 135-amino-acid chain: Transcription antitermination protein NusB (135 aa).

Belongs to the NusB family.

Functionally, involved in transcription antitermination. Required for transcription of ribosomal RNA (rRNA) genes. Binds specifically to the boxA antiterminator sequence of the ribosomal RNA (rrn) operons. This chain is Transcription antitermination protein NusB, found in Bdellovibrio bacteriovorus (strain ATCC 15356 / DSM 50701 / NCIMB 9529 / HD100).